The following is a 338-amino-acid chain: L-serine dehydratase (338 aa).

Lys39 is subject to N6-(pyridoxal phosphate)lysine.

The protein belongs to the serine/threonine dehydratase family. Pyridoxal 5'-phosphate is required as a cofactor.

The protein resides in the cytoplasm. It catalyses the reaction L-serine = pyruvate + NH4(+). Its pathway is carbohydrate biosynthesis; gluconeogenesis. This chain is L-serine dehydratase (SDL1), found in Saccharomyces cerevisiae (strain RM11-1a) (Baker's yeast).